A 263-amino-acid chain; its full sequence is HTH-type transcriptional repressor NanR (263 aa).

An HTH gntR-type domain is found at 30-98; the sequence is KKLSEMVEEE…NGERARVSRP (69 aa). The segment at residues 58–77 is a DNA-binding region (H-T-H motif); the sequence is ERELMAFFNVGRPSVREALA.

It belongs to the NanR family.

Its function is as follows. Transcriptional repressor that controls expression of the genes required for the catabolism of sialic acids. This chain is HTH-type transcriptional repressor NanR, found in Salmonella bongori (strain ATCC 43975 / DSM 13772 / NCTC 12419).